The following is a 188-amino-acid chain: UPF0200 protein YG5714_1176 (188 aa).

15-22 (GMPGSGKS) serves as a coordination point for ATP.

Belongs to the UPF0200 family.

The polypeptide is UPF0200 protein YG5714_1176 (Saccharolobus islandicus (strain Y.G.57.14 / Yellowstone #1) (Sulfolobus islandicus)).